Reading from the N-terminus, the 412-residue chain is Gamma-glutamyl phosphate reductase (412 aa).

Belongs to the gamma-glutamyl phosphate reductase family.

The protein resides in the cytoplasm. It carries out the reaction L-glutamate 5-semialdehyde + phosphate + NADP(+) = L-glutamyl 5-phosphate + NADPH + H(+). Its pathway is amino-acid biosynthesis; L-proline biosynthesis; L-glutamate 5-semialdehyde from L-glutamate: step 2/2. Its function is as follows. Catalyzes the NADPH-dependent reduction of L-glutamate 5-phosphate into L-glutamate 5-semialdehyde and phosphate. The product spontaneously undergoes cyclization to form 1-pyrroline-5-carboxylate. This chain is Gamma-glutamyl phosphate reductase, found in Nitratiruptor sp. (strain SB155-2).